Consider the following 587-residue polypeptide: Kelch-like protein 3 (587 aa).

Ser10 carries the post-translational modification Phosphoserine. The 68-residue stretch at 50 to 117 (CDVMIVAEDV…IYTAEIEVTE (68 aa)) folds into the BTB domain. The region spanning 152-254 (CLGIRAFADV…PRDYLVQTVE (103 aa)) is the BACK domain. Thr295 carries the phosphothreonine modification. Kelch repeat units follow at residues 302 to 347 (VMIV…FMAG), 348 to 394 (HVYA…VLND), 396 to 441 (LYAV…VVEG), 442 to 490 (KLYA…VLSG), 491 to 537 (QLYA…AVNG), and 539 to 585 (LYVV…VIHK). Thr375 bears the Phosphothreonine mark. Ser376 bears the Phosphoserine mark. Ser433 is modified (phosphoserine; by PKA and PKC).

It belongs to the KLHL3 family. Homodimer. Component of the BCR(KLHL3) E3 ubiquitin ligase complex, at least composed of CUL3 and KLHL3 and RBX1. Interacts with CLDN8. Post-translationally, phosphorylation at Ser-433 by PKA or PKC decreases the interaction with WNK1 and WNK4, leading to inhibit their degradation by the BCR(KLHL3) complex. Phosphorylated at Ser-433 by PKC in response to angiotensin II signaling, decreasing ability to promote degradation of WNK1 and WNK4, leading to activation of Na-Cl cotransporter SLC12A3/NCC. Phosphorylation at Ser-433 is increased by insulin. Dephosphorylated at Ser-433 by calcineurin PPP3CA, promoting degradation of WNK1 and WNK4. As to expression, widely expressed.

It localises to the cytoplasm. Its subcellular location is the cytosol. It is found in the cytoskeleton. The protein operates within protein modification; protein ubiquitination. Its function is as follows. Substrate-specific adapter of a BCR (BTB-CUL3-RBX1) E3 ubiquitin ligase complex that acts as a regulator of ion transport in the distal nephron. The BCR(KLHL3) complex acts by mediating ubiquitination and degradation of WNK1 and WNK4, two activators of Na-Cl cotransporter SLC12A3/NCC in distal convoluted tubule cells of kidney, thereby regulating NaCl reabsorption. The BCR(KLHL3) complex also mediates ubiquitination and degradation of WNK3. The BCR(KLHL3) complex also mediates ubiquitination of CLDN8, a tight-junction protein required for paracellular chloride transport in the kidney, leading to its degradation. In Homo sapiens (Human), this protein is Kelch-like protein 3.